Reading from the N-terminus, the 379-residue chain is MSGFLPFSRPAMGVEELAAVKEVLESGWITTGPKNQALEQAFCQLTGNQHAIAVSSATAGMHITLMALEIGKGDEVITPSLTWVSTLNMISLLGATPVMVDVDRDTLMVTPEVIEAAITPRTKAIIPVHYAGAPADIDAIRAIGERYGIAVIEDAAHAVGTYYKGRHIGAKGTAIFSFHAIKNITCAEGGLIVTDNENLARQLRMLKFHGLGVDAYDRHTWGRAPQAEVLTPGYKYNLTDINAAIALTQLVKLEHLNTRRREIAQQYQQALAALPFQPLSLPAWPHVHAWHLFIIRVDEQRCGISRDALMEALKEIGIGTGLHFRAAHTQKYYRERFPTLSLPNTEWNSERICSLPLFPDMTTADADRVITALQQLAGQ.

K182 is subject to N6-(pyridoxal phosphate)lysine.

It belongs to the DegT/DnrJ/EryC1 family. ArnB subfamily. In terms of assembly, homodimer. Requires pyridoxal 5'-phosphate as cofactor.

It carries out the reaction UDP-4-amino-4-deoxy-beta-L-arabinose + 2-oxoglutarate = UDP-beta-L-threo-pentopyranos-4-ulose + L-glutamate. It functions in the pathway nucleotide-sugar biosynthesis; UDP-4-deoxy-4-formamido-beta-L-arabinose biosynthesis; UDP-4-deoxy-4-formamido-beta-L-arabinose from UDP-alpha-D-glucuronate: step 2/3. It participates in bacterial outer membrane biogenesis; lipopolysaccharide biosynthesis. Functionally, catalyzes the conversion of UDP-4-keto-arabinose (UDP-Ara4O) to UDP-4-amino-4-deoxy-L-arabinose (UDP-L-Ara4N). The modified arabinose is attached to lipid A and is required for resistance to polymyxin and cationic antimicrobial peptides. The sequence is that of UDP-4-amino-4-deoxy-L-arabinose--oxoglutarate aminotransferase from Escherichia coli O127:H6 (strain E2348/69 / EPEC).